A 314-amino-acid polypeptide reads, in one-letter code: Acetyl-coenzyme A carboxylase carboxyl transferase subunit alpha (314 aa).

Residues 32 to 289 form the CoA carboxyltransferase C-terminal domain; the sequence is EIDMLEASLK…KKMFLKHLNE (258 aa).

The protein belongs to the AccA family. Acetyl-CoA carboxylase is a heterohexamer composed of biotin carboxyl carrier protein (AccB), biotin carboxylase (AccC) and two subunits each of ACCase subunit alpha (AccA) and ACCase subunit beta (AccD).

Its subcellular location is the cytoplasm. It carries out the reaction N(6)-carboxybiotinyl-L-lysyl-[protein] + acetyl-CoA = N(6)-biotinyl-L-lysyl-[protein] + malonyl-CoA. It functions in the pathway lipid metabolism; malonyl-CoA biosynthesis; malonyl-CoA from acetyl-CoA: step 1/1. Functionally, component of the acetyl coenzyme A carboxylase (ACC) complex. First, biotin carboxylase catalyzes the carboxylation of biotin on its carrier protein (BCCP) and then the CO(2) group is transferred by the carboxyltransferase to acetyl-CoA to form malonyl-CoA. The chain is Acetyl-coenzyme A carboxylase carboxyl transferase subunit alpha from Staphylococcus epidermidis (strain ATCC 12228 / FDA PCI 1200).